Reading from the N-terminus, the 323-residue chain is Transaldolase (323 aa).

Lys133 (schiff-base intermediate with substrate) is an active-site residue.

The protein belongs to the transaldolase family. Type 1 subfamily. In terms of assembly, monomer.

The enzyme catalyses D-sedoheptulose 7-phosphate + D-glyceraldehyde 3-phosphate = D-erythrose 4-phosphate + beta-D-fructose 6-phosphate. It participates in carbohydrate degradation; pentose phosphate pathway; D-glyceraldehyde 3-phosphate and beta-D-fructose 6-phosphate from D-ribose 5-phosphate and D-xylulose 5-phosphate (non-oxidative stage): step 2/3. Functionally, important for the balance of metabolites in the pentose-phosphate pathway. Involved in xylose fermentation to ethanol. The polypeptide is Transaldolase (Gibberella intermedia (Bulb rot disease fungus)).